The sequence spans 729 residues: Glycine--tRNA ligase, mitochondrial 1 (729 aa).

Met-1 carries the post-translational modification N-acetylmethionine. The N-terminal 28 residues, 1-28 (MRIFSTFVFHRRQQIFNLRQFQTTTILR), are a transit peptide targeting the mitochondrion. Positions 50 to 106 (SLSEKSSSVEAQGNAVRALKASRAAKPEIDAAIEQLNKLKLEKSTVEKELQSIISSS) constitute a WHEP-TRS domain. Glu-296 is a glycine binding site. ATP contacts are provided by residues 328-330 (RNE) and 339-340 (RV). Glu-347 is a glycine binding site. Residue 454 to 455 (EC) participates in ATP binding. 575–577 (EPS) contacts glycine. Arg-582 lines the ATP pocket.

Belongs to the class-II aminoacyl-tRNA synthetase family. As to quaternary structure, homodimer.

The protein localises to the mitochondrion. The protein resides in the cytoplasm. It localises to the cytosol. The enzyme catalyses tRNA(Gly) + glycine + ATP = glycyl-tRNA(Gly) + AMP + diphosphate. It catalyses the reaction 2 ATP + H(+) = P(1),P(4)-bis(5'-adenosyl) tetraphosphate + diphosphate. In terms of biological role, catalyzes the ATP-dependent ligation of glycine to the 3'-end of its cognate tRNA, via the formation of an aminoacyl-adenylate intermediate (Gly-AMP). Also produces diadenosine tetraphosphate (Ap4A), a universal pleiotropic signaling molecule needed for cell regulation pathways, by direct condensation of 2 ATPs. Thereby, may play a special role in Ap4A homeostasis. This is Glycine--tRNA ligase, mitochondrial 1 from Arabidopsis thaliana (Mouse-ear cress).